We begin with the raw amino-acid sequence, 363 residues long: Teichoic acids export ATP-binding protein TagH (363 aa).

Residues 27–246 enclose the ABC transporter domain; that stretch reads KHFFNIGNVD…YRKFSKDFKA (220 aa). 60–67 lines the ATP pocket; it reads GINGSGKS. The tract at residues 247-363 is unknown; that stretch reads QTAAYRKKYQ…KSQSVLFNSK (117 aa).

Belongs to the ABC transporter superfamily. Teichoic acids exporter (TC 3.A.1.104.1) family. In terms of assembly, the complex is composed of two ATP-binding proteins (TagH) and two transmembrane proteins (TagG).

The protein localises to the cell membrane. The enzyme catalyses ATP + H2O + teichoic acidSide 1 = ADP + phosphate + teichoic acidSide 2.. In terms of biological role, part of the ABC transporter complex TagGH involved in teichoic acids export. Responsible for energy coupling to the transport system. The chain is Teichoic acids export ATP-binding protein TagH from Lactiplantibacillus plantarum (strain ATCC BAA-793 / NCIMB 8826 / WCFS1) (Lactobacillus plantarum).